The primary structure comprises 529 residues: Basal body-orientation factor 1 (529 aa).

Positions 1–13 (MPSKGKDKKKGKS) are enriched in basic residues. The segment at 1-22 (MPSKGKDKKKGKSKGKDTKKLI) is disordered. Coiled-coil stretches lie at residues 85–201 (LKKQ…EAEK) and 271–361 (VKEK…EVER).

The protein belongs to the BBOF1 family. As to quaternary structure, interacts with MNS1 and ODF2.

It is found in the cytoplasm. The protein localises to the cytoskeleton. Its subcellular location is the cilium basal body. It localises to the flagellum axoneme. In terms of biological role, plays an essential role in sperm motility and male fertility by stabilizing the sperm flagellar axonemal structure. May be required for the stability of ODF2 and MANS1 proteins. Dispensable for the assembly and function of motile cilia. In Homo sapiens (Human), this protein is Basal body-orientation factor 1.